Here is a 25-residue protein sequence, read N- to C-terminus: U11-ctenitoxin-Co1b (25 aa).

2 cysteine pairs are disulfide-bonded: Cys4-Cys18 and Cys11-Cys22.

Monomer. Expressed by the venom gland.

The protein localises to the secreted. Its function is as follows. Neurotoxin. The protein is U11-ctenitoxin-Co1b of Ctenus ornatus (Brazilian spider).